Reading from the N-terminus, the 442-residue chain is Trigger factor (442 aa).

Positions 165-250 (DDRVIIDFEG…LQKVMAPELP (86 aa)) constitute a PPIase FKBP-type domain.

The protein belongs to the FKBP-type PPIase family. Tig subfamily.

The protein resides in the cytoplasm. It catalyses the reaction [protein]-peptidylproline (omega=180) = [protein]-peptidylproline (omega=0). In terms of biological role, involved in protein export. Acts as a chaperone by maintaining the newly synthesized protein in an open conformation. Functions as a peptidyl-prolyl cis-trans isomerase. The sequence is that of Trigger factor from Coxiella burnetii (strain CbuG_Q212) (Coxiella burnetii (strain Q212)).